A 431-amino-acid chain; its full sequence is Ornithine decarboxylase (431 aa).

The residue at position 94 (Lys94) is an N6-(pyridoxal phosphate)lysine. Pyridoxal 5'-phosphate contacts are provided by residues Ser226, Gly264, and 297 to 300 (EPGR). 340 to 341 (YD) contributes to the substrate binding site. The active-site Proton donor; shared with dimeric partner is the Cys376. Asp377 lines the substrate pocket. Tyr405 contributes to the pyridoxal 5'-phosphate binding site.

It belongs to the Orn/Lys/Arg decarboxylase class-II family. In terms of assembly, homodimer. Only the dimer is catalytically active, as the active sites are constructed of residues from both monomers. The cofactor is pyridoxal 5'-phosphate.

It carries out the reaction L-ornithine + H(+) = putrescine + CO2. Its pathway is amine and polyamine biosynthesis; putrescine biosynthesis via L-ornithine pathway; putrescine from L-ornithine: step 1/1. Its activity is regulated as follows. Inhibited by antizyme (AZ) in response to polyamine levels. AZ inhibits the assembly of the functional homodimer by binding to ODC monomers and targeting them for ubiquitin-independent proteolytic destruction by the 26S proteasome. Its function is as follows. Catalyzes the first and rate-limiting step of polyamine biosynthesis that converts ornithine into putrescine, which is the precursor for the polyamines, spermidine and spermine. Polyamines are essential for cell proliferation and are implicated in cellular processes, ranging from DNA replication to apoptosis. This chain is Ornithine decarboxylase, found in Datura stramonium (Jimsonweed).